A 148-amino-acid chain; its full sequence is Snaclec stejaggregin-A subunit beta-2 (148 aa).

The N-terminal stretch at 1-23 (MGQFIFVSFGLLVVLLSLSGAGA) is a signal peptide. A disulfide bridge links Cys-27 with Cys-38. One can recognise a C-type lectin domain in the interval 34 to 145 (YDLYCYKVFK…CSRTHYVVCK (112 aa)). N-linked (GlcNAc...) asparagine glycosylation is found at Asn-47 and Asn-78. 2 cysteine pairs are disulfide-bonded: Cys-55–Cys-144 and Cys-121–Cys-136.

This sequence belongs to the snaclec family. Heteromultimer; disulfide-linked. In terms of tissue distribution, expressed by the venom gland.

It is found in the secreted. Its function is as follows. Interferes with one step of hemostasis (modulation of platelet aggregation, or coagulation cascade, for example). This is Snaclec stejaggregin-A subunit beta-2 from Trimeresurus stejnegeri (Chinese green tree viper).